Reading from the N-terminus, the 145-residue chain is Maximins 5/H4 type 2 (145 aa).

A signal peptide spans 1–18 (MNFKYIVAVSFLIASAYA). Propeptides lie at residues 19–43 (RSVQ…REIR) and 74–124 (TAEE…KEKR). Residue L144 is modified to Leucine amide.

Belongs to the bombinin family. As to expression, expressed by the skin glands.

Its subcellular location is the secreted. In terms of biological role, maximin-5 shows antibacterial activity against both Gram-positive and Gram-negative bacteria. The only exception is the resistance of E.coli. Also shows antimicrobial activity against fungi C.albicans, A.flavus and P.uticale. It has little hemolytic activity. It does not possess a significant cytotoxicity against tumor cell lines. It does not possess a significant anti-HIV activity. Its function is as follows. Maximin-H4 shows antibacterial activity against both Gram-positive and Gram-negative bacteria. It also shows antimicrobial activity against the fungus C.albicans. Shows strong hemolytic activity. The protein is Maximins 5/H4 type 2 of Bombina maxima (Giant fire-bellied toad).